The chain runs to 102 residues: Large ribosomal subunit protein uL24 (102 aa).

It belongs to the universal ribosomal protein uL24 family. Part of the 50S ribosomal subunit.

Functionally, one of two assembly initiator proteins, it binds directly to the 5'-end of the 23S rRNA, where it nucleates assembly of the 50S subunit. One of the proteins that surrounds the polypeptide exit tunnel on the outside of the subunit. This Burkholderia mallei (strain NCTC 10229) protein is Large ribosomal subunit protein uL24.